We begin with the raw amino-acid sequence, 338 residues long: Fructose-1,6-bisphosphatase class 1 (338 aa).

Residues glutamate 92, aspartate 115, leucine 117, and aspartate 118 each contribute to the Mg(2+) site. Substrate-binding positions include 118–121, asparagine 211, tyrosine 244, 262–264, and lysine 274; these read DGSS and YLY. Glutamate 280 provides a ligand contact to Mg(2+).

The protein belongs to the FBPase class 1 family. Homotetramer. Mg(2+) is required as a cofactor.

It is found in the cytoplasm. It carries out the reaction beta-D-fructose 1,6-bisphosphate + H2O = beta-D-fructose 6-phosphate + phosphate. Its pathway is carbohydrate biosynthesis; gluconeogenesis. The sequence is that of Fructose-1,6-bisphosphatase class 1 from Vibrio vulnificus (strain YJ016).